The sequence spans 246 residues: 5'-nucleotidase SurE (246 aa).

Positions 8, 9, 39, and 91 each coordinate a divalent metal cation.

The protein belongs to the SurE nucleotidase family. The cofactor is a divalent metal cation.

It is found in the cytoplasm. The enzyme catalyses a ribonucleoside 5'-phosphate + H2O = a ribonucleoside + phosphate. Its function is as follows. Nucleotidase that shows phosphatase activity on nucleoside 5'-monophosphates. The polypeptide is 5'-nucleotidase SurE (Mannheimia succiniciproducens (strain KCTC 0769BP / MBEL55E)).